A 355-amino-acid polypeptide reads, in one-letter code: D-alanine--D-alanine ligase (355 aa).

Positions 143 to 350 (KQIFSNLSIP…IDQLVAKLID (208 aa)) constitute an ATP-grasp domain. 178–233 (IEKLNLPVFVKPANSGSSLGISKAKNKSEIIKALQKAWEIDSRIVIEEGLNVRELE) provides a ligand contact to ATP. The Mg(2+) site is built by aspartate 303, glutamate 317, and asparagine 319.

The protein belongs to the D-alanine--D-alanine ligase family. Requires Mg(2+) as cofactor. Mn(2+) is required as a cofactor.

It is found in the cytoplasm. The enzyme catalyses 2 D-alanine + ATP = D-alanyl-D-alanine + ADP + phosphate + H(+). It functions in the pathway cell wall biogenesis; peptidoglycan biosynthesis. In terms of biological role, cell wall formation. This chain is D-alanine--D-alanine ligase, found in Prochlorococcus marinus (strain MIT 9515).